Here is a 265-residue protein sequence, read N- to C-terminus: 4-hydroxy-2-oxo-heptane-1,7-dioate aldolase (265 aa).

Catalysis depends on His-45, which acts as the Proton acceptor. Gln-147 contributes to the substrate binding site. Position 149 (Glu-149) interacts with a divalent metal cation. Positions 174 and 175 each coordinate substrate. Asp-175 contributes to the a divalent metal cation binding site.

This sequence belongs to the HpcH/HpaI aldolase family. As to quaternary structure, homohexamer; trimer of dimers. Requires a divalent metal cation as cofactor.

It carries out the reaction 4-hydroxy-2-oxoheptanedioate = succinate semialdehyde + pyruvate. The protein operates within aromatic compound metabolism; 4-hydroxyphenylacetate degradation; pyruvate and succinate semialdehyde from 4-hydroxyphenylacetate: step 7/7. In terms of biological role, catalyzes the reversible retro-aldol cleavage of 4-hydroxy-2-ketoheptane-1,7-dioate (HKHD) to pyruvate and succinic semialdehyde. The protein is 4-hydroxy-2-oxo-heptane-1,7-dioate aldolase of Klebsiella pneumoniae subsp. pneumoniae (strain ATCC 700721 / MGH 78578).